A 72-amino-acid polypeptide reads, in one-letter code: Large ribosomal subunit protein bL28 (72 aa).

The protein belongs to the bacterial ribosomal protein bL28 family.

The sequence is that of Large ribosomal subunit protein bL28 from Chlorobium phaeobacteroides (strain DSM 266 / SMG 266 / 2430).